The chain runs to 89 residues: Small ribosomal subunit protein uS15 (89 aa).

The protein belongs to the universal ribosomal protein uS15 family. Part of the 30S ribosomal subunit. Forms a bridge to the 50S subunit in the 70S ribosome, contacting the 23S rRNA.

In terms of biological role, one of the primary rRNA binding proteins, it binds directly to 16S rRNA where it helps nucleate assembly of the platform of the 30S subunit by binding and bridging several RNA helices of the 16S rRNA. Functionally, forms an intersubunit bridge (bridge B4) with the 23S rRNA of the 50S subunit in the ribosome. The protein is Small ribosomal subunit protein uS15 of Pseudomonas putida (strain GB-1).